The chain runs to 136 residues: Small ribosomal subunit protein uS19 (136 aa).

It belongs to the universal ribosomal protein uS19 family.

Protein S19 forms a complex with S13 that binds strongly to the 16S ribosomal RNA. The sequence is that of Small ribosomal subunit protein uS19 from Methanosarcina mazei (strain ATCC BAA-159 / DSM 3647 / Goe1 / Go1 / JCM 11833 / OCM 88) (Methanosarcina frisia).